Reading from the N-terminus, the 330-residue chain is Phospho-N-acetylmuramoyl-pentapeptide-transferase (330 aa).

Helical transmembrane passes span 13–33 (VFVFILSFAFSLILGPVLIPM), 58–78 (PTMGGMIFLIPVTVLAAFYAG), 83–103 (ILPLIFVTLGFGLIGFIDDFI), 113–133 (LYWNQKMFGLLLVAVTFAVYL), 152–172 (VSLGWLFVPFVVLVLIASTNA), 179–199 (LDGLAAGVTLIVTVFFTIVAM), 209–229 (MFSAMVAGGCLGFLTFNAYPA), 231–250 (IFMGDTGSLALGGAVGAIAI), and 304–324 (VKVVLVFWTITVLLCILGFFA).

Belongs to the glycosyltransferase 4 family. MraY subfamily. Mg(2+) is required as a cofactor.

The protein resides in the cell membrane. The catalysed reaction is UDP-N-acetyl-alpha-D-muramoyl-L-alanyl-gamma-D-glutamyl-meso-2,6-diaminopimeloyl-D-alanyl-D-alanine + di-trans,octa-cis-undecaprenyl phosphate = di-trans,octa-cis-undecaprenyl diphospho-N-acetyl-alpha-D-muramoyl-L-alanyl-D-glutamyl-meso-2,6-diaminopimeloyl-D-alanyl-D-alanine + UMP. It functions in the pathway cell wall biogenesis; peptidoglycan biosynthesis. In terms of biological role, catalyzes the initial step of the lipid cycle reactions in the biosynthesis of the cell wall peptidoglycan: transfers peptidoglycan precursor phospho-MurNAc-pentapeptide from UDP-MurNAc-pentapeptide onto the lipid carrier undecaprenyl phosphate, yielding undecaprenyl-pyrophosphoryl-MurNAc-pentapeptide, known as lipid I. In Acetivibrio thermocellus (strain ATCC 27405 / DSM 1237 / JCM 9322 / NBRC 103400 / NCIMB 10682 / NRRL B-4536 / VPI 7372) (Clostridium thermocellum), this protein is Phospho-N-acetylmuramoyl-pentapeptide-transferase.